Reading from the N-terminus, the 418-residue chain is Dwarfin sma-2 (418 aa).

The 127-residue stretch at 8-134 (KKITERLKWK…YKRVHATGVL (127 aa)) folds into the MH1 domain. Cys62, Cys107, Cys119, and His124 together coordinate Zn(2+). One can recognise an MH2 domain in the interval 222-418 (WATVSYYELN…PTPRPISSIS (197 aa)).

This sequence belongs to the dwarfin/SMAD family.

The protein localises to the cytoplasm. Its subcellular location is the nucleus. Functionally, involved in TGF-beta pathway. Plays a role in male tail tip morphogenesis. This chain is Dwarfin sma-2, found in Caenorhabditis elegans.